We begin with the raw amino-acid sequence, 221 residues long: Prolactin-3B1 (221 aa).

An N-terminal signal peptide occupies residues 1 to 30 (MQLPLTPLSFSGTLLLMAMSNFLLWEHVTS). 2 cysteine pairs are disulfide-bonded: cysteine 81–cysteine 196 and cysteine 213–cysteine 221.

This sequence belongs to the somatotropin/prolactin family.

It localises to the secreted. The chain is Prolactin-3B1 (PRL3B1) from Mesocricetus auratus (Golden hamster).